A 53-amino-acid chain; its full sequence is uncharacterized protein (53 aa).

A signal peptide spans 1–23; the sequence is MSILLKILFKLLLLILSITFVIT.

This is an uncharacterized protein from Acheta domesticus (House cricket).